Here is a 203-residue protein sequence, read N- to C-terminus: 5-formyltetrahydrofolate cyclo-ligase (203 aa).

Position 2 is an N-acetylalanine (A2). ATP-binding positions include 10–14 (KRSLR) and R14. Residues L56, E61, and 148–152 (RGKGY) contribute to the substrate site. An ATP-binding site is contributed by 145–153 (RLGRGKGYY). 2 residues coordinate Mg(2+): D154 and D189.

The protein belongs to the 5-formyltetrahydrofolate cyclo-ligase family. As to quaternary structure, monomer. The cofactor is Mg(2+).

It localises to the cytoplasm. It catalyses the reaction (6S)-5-formyl-5,6,7,8-tetrahydrofolate + ATP = (6R)-5,10-methenyltetrahydrofolate + ADP + phosphate. In terms of biological role, contributes to tetrahydrofolate metabolism. Helps regulate carbon flow through the folate-dependent one-carbon metabolic network that supplies carbon for the biosynthesis of purines, thymidine and amino acids. Catalyzes the irreversible conversion of 5-formyltetrahydrofolate (5-FTHF) to yield 5,10-methenyltetrahydrofolate. This Homo sapiens (Human) protein is 5-formyltetrahydrofolate cyclo-ligase (MTHFS).